The primary structure comprises 471 residues: Kynurenine 3-monooxygenase (471 aa).

FAD-binding positions include Val-19, 37–40 (YESR), and Ala-57. Arg-85 and Tyr-99 together coordinate L-kynurenine. Residues Arg-111, Leu-136, Thr-172, Asp-304, and 317–318 (MN) contribute to the FAD site. Asn-363 and Tyr-398 together coordinate L-kynurenine. A run of 2 helical transmembrane segments spans residues 385–404 (CLHTLMPSTFIPLYTMVTFS) and 425–445 (ALFFFGTLVALSTTYLLTGPT).

This sequence belongs to the aromatic-ring hydroxylase family. KMO subfamily. FAD serves as cofactor.

It is found in the mitochondrion outer membrane. The enzyme catalyses L-kynurenine + NADPH + O2 + H(+) = 3-hydroxy-L-kynurenine + NADP(+) + H2O. It functions in the pathway cofactor biosynthesis; NAD(+) biosynthesis; quinolinate from L-kynurenine: step 1/3. Its function is as follows. Catalyzes the hydroxylation of L-kynurenine (L-Kyn) to form 3-hydroxy-L-kynurenine (L-3OHKyn). Required for synthesis of quinolinic acid, a neurotoxic NMDA receptor antagonist and potential endogenous inhibitor of NMDA receptor signaling in axonal targeting, synaptogenesis and apoptosis during brain development. Quinolinic acid may also affect NMDA receptor signaling in pancreatic beta cells, osteoblasts, myocardial cells, and the gastrointestinal tract. The chain is Kynurenine 3-monooxygenase from Sus scrofa (Pig).